A 121-amino-acid polypeptide reads, in one-letter code: Large ribosomal subunit protein uL22 (121 aa).

This sequence belongs to the universal ribosomal protein uL22 family. In terms of assembly, part of the 50S ribosomal subunit.

This protein binds specifically to 23S rRNA; its binding is stimulated by other ribosomal proteins, e.g. L4, L17, and L20. It is important during the early stages of 50S assembly. It makes multiple contacts with different domains of the 23S rRNA in the assembled 50S subunit and ribosome. In terms of biological role, the globular domain of the protein is located near the polypeptide exit tunnel on the outside of the subunit, while an extended beta-hairpin is found that lines the wall of the exit tunnel in the center of the 70S ribosome. This Hydrogenobaculum sp. (strain Y04AAS1) protein is Large ribosomal subunit protein uL22.